Reading from the N-terminus, the 602-residue chain is Translation initiation factor IF-2 (602 aa).

The tr-type G domain maps to 112–281 (KRAPIITIMG…LLLCEVLDLK (170 aa)). The tract at residues 121–128 (GHVDHGKT) is G1. 121 to 128 (GHVDHGKT) provides a ligand contact to GTP. Residues 146-150 (GITQH) are G2. A G3 region spans residues 167–170 (DTPG). GTP-binding positions include 167-171 (DTPGH) and 221-224 (NKMD). The segment at 221 to 224 (NKMD) is G4. The segment at 257–259 (SAL) is G5.

This sequence belongs to the TRAFAC class translation factor GTPase superfamily. Classic translation factor GTPase family. IF-2 subfamily.

It localises to the cytoplasm. In terms of biological role, one of the essential components for the initiation of protein synthesis. Protects formylmethionyl-tRNA from spontaneous hydrolysis and promotes its binding to the 30S ribosomal subunits. Also involved in the hydrolysis of GTP during the formation of the 70S ribosomal complex. The chain is Translation initiation factor IF-2 from Mycoplasmopsis synoviae (strain 53) (Mycoplasma synoviae).